A 232-amino-acid polypeptide reads, in one-letter code: Ribonuclease 3 (232 aa).

Residues 9 to 131 (INLLQKKLGY…IIGGIFLDSN (123 aa)) enclose the RNase III domain. Mg(2+) is bound at residue Glu-44. The active site involves Asp-48. Residues Asp-117 and Glu-120 each contribute to the Mg(2+) site. Glu-120 is an active-site residue. The DRBM domain maps to 158-228 (DPKTRLQEYL…AENALKFLIE (71 aa)).

This sequence belongs to the ribonuclease III family. As to quaternary structure, homodimer. Mg(2+) is required as a cofactor.

It is found in the cytoplasm. It carries out the reaction Endonucleolytic cleavage to 5'-phosphomonoester.. Digests double-stranded RNA. Involved in the processing of primary rRNA transcript to yield the immediate precursors to the large and small rRNAs (23S and 16S). Processes some mRNAs, and tRNAs when they are encoded in the rRNA operon. Processes pre-crRNA and tracrRNA of type II CRISPR loci if present in the organism. This Blochmanniella floridana protein is Ribonuclease 3.